A 573-amino-acid polypeptide reads, in one-letter code: Phosphomethylpyrimidine synthase (573 aa).

Substrate contacts are provided by residues asparagine 190, methionine 219, tyrosine 248, histidine 284, 304 to 306 (SRG), 345 to 348 (DGLR), and glutamate 384. Histidine 388 serves as a coordination point for Zn(2+). Tyrosine 411 lines the substrate pocket. Histidine 452 serves as a coordination point for Zn(2+). [4Fe-4S] cluster-binding residues include cysteine 532, cysteine 535, and cysteine 540.

Belongs to the ThiC family. It depends on [4Fe-4S] cluster as a cofactor.

The catalysed reaction is 5-amino-1-(5-phospho-beta-D-ribosyl)imidazole + S-adenosyl-L-methionine = 4-amino-2-methyl-5-(phosphooxymethyl)pyrimidine + CO + 5'-deoxyadenosine + formate + L-methionine + 3 H(+). The protein operates within cofactor biosynthesis; thiamine diphosphate biosynthesis. Catalyzes the synthesis of the hydroxymethylpyrimidine phosphate (HMP-P) moiety of thiamine from aminoimidazole ribotide (AIR) in a radical S-adenosyl-L-methionine (SAM)-dependent reaction. The sequence is that of Phosphomethylpyrimidine synthase from Geobacillus sp. (strain WCH70).